We begin with the raw amino-acid sequence, 196 residues long: Phosphoheptose isomerase (196 aa).

An SIS domain is found at 36–195 (VIQAYKLGKK…EKELFGEKVD (160 aa)). Residue 51 to 53 (NGG) participates in substrate binding. Positions 60 and 64 each coordinate Zn(2+). Residues glutamate 64, 93–94 (ND), 119–121 (STS), serine 124, and glutamine 171 each bind substrate. 2 residues coordinate Zn(2+): glutamine 171 and histidine 179.

This sequence belongs to the SIS family. GmhA subfamily. The cofactor is Zn(2+).

It localises to the cytoplasm. The enzyme catalyses 2 D-sedoheptulose 7-phosphate = D-glycero-alpha-D-manno-heptose 7-phosphate + D-glycero-beta-D-manno-heptose 7-phosphate. The protein operates within carbohydrate biosynthesis; D-glycero-D-manno-heptose 7-phosphate biosynthesis; D-glycero-alpha-D-manno-heptose 7-phosphate and D-glycero-beta-D-manno-heptose 7-phosphate from sedoheptulose 7-phosphate: step 1/1. In terms of biological role, catalyzes the isomerization of sedoheptulose 7-phosphate in D-glycero-D-manno-heptose 7-phosphate. This is Phosphoheptose isomerase from Clostridium acetobutylicum (strain ATCC 824 / DSM 792 / JCM 1419 / IAM 19013 / LMG 5710 / NBRC 13948 / NRRL B-527 / VKM B-1787 / 2291 / W).